The chain runs to 306 residues: MLRWTRAWRLPREGLGPHGPSFARVPVAPSSSSGGRGGAEPRPLPLSYRLLDGEAALPAVVFLHGLFGSKTNFNSIAKILAQQTGRRVLTVDARNHGDSPHSPDMSYEIMSQDLQDLLPQLGLVPCVVVGHSMGGKTAMLLALQRPELVERLIAVDISPVESTGVSHFATYVAAMRAINIADELPRSRARKLADEQLSSVIQDMAVRQHLLTNLVEVDGRFVWRVNLDALTQHLDKILAFPQRQESYLGPTLFLLGGNSQFVHPSHHPEIMRLFPRAQMQTVPNAGHWIHADRPQDFIAAIRGFLV.

A disordered region spans residues 19-40; the sequence is GPSFARVPVAPSSSSGGRGGAE. Residues 23-33 are compositionally biased toward low complexity; the sequence is ARVPVAPSSSS. Position 78 is an N6-succinyllysine (lysine 78). Active-site charge relay system residues include serine 132, aspartate 228, and histidine 287.

This sequence belongs to the AB hydrolase superfamily. As to quaternary structure, interacts with OGDH and DLST; this interaction maintains the functional lipoylation of the 2-oxoglutarate dehydrogenase complex. In terms of processing, phosphorylated. In terms of tissue distribution, ubiquitously expressed. Highly expressed in small intestine, prostate and thyroid, while aorta and colon tissues exhibit weak expression levels.

It is found in the mitochondrion. The protein resides in the mitochondrion matrix. It catalyses the reaction 1-octadecanoyl-2-(5Z,8Z,11Z,14Z-eicosatetraenoyl)-sn-glycerol + H2O = 2-(5Z,8Z,11Z,14Z-eicosatetraenoyl)-glycerol + octadecanoate + H(+). It carries out the reaction a 1,2-diacyl-sn-glycerol + H2O = a 2-acylglycerol + a fatty acid + H(+). The catalysed reaction is a 1,3-diacyl-sn-glycerol + H2O = a 1-acyl-sn-glycerol + a fatty acid + H(+). The enzyme catalyses 1-octadecanoyl-2-(9Z-octadecenoyl)-sn-glycerol + H2O = 2-(9Z-octadecenoyl)-glycerol + octadecanoate + H(+). It catalyses the reaction 1-octadecanoyl-2-(4Z,7Z,10Z,13Z,16Z,19Z-docosahexaenoyl)-sn-glycerol + H2O = 2-(4Z,7Z,10Z,13Z,16Z,19Z-docosahexaenoyl)-glycerol + octadecanoate + H(+). It carries out the reaction 1,2-didecanoylglycerol + H2O = decanoylglycerol + decanoate + H(+). Catalyzes the hydrolysis of diacylglycerol in vitro and may function as a key regulator in lipid metabolism, namely by regulating the intracellular levels of diacylglycerol. 1,2-diacyl-sn-glycerols are the preferred substrate over 1,3-diacyl-sn-glycerols. The enzyme hydrolyzes stearate in preference to palmitate from the sn-1 position of 1,2-diacyl-sn-glycerols. Maintains the functional lipoylation of the 2-oxoglutarate dehydrogenase complex (OGDHc) through its interaction with the OGDHc by preventing the formation of lipoyl adducts. In addition, is also required for the expansion and differentiation of embryonic stem cells (ESCs). This chain is sn-1-specific diacylglycerol lipase ABHD11, found in Homo sapiens (Human).